Here is a 1390-residue protein sequence, read N- to C-terminus: ATPase family AAA domain-containing protein 2 (1390 aa).

Residues 40 to 63 form a disordered region; it reads RSAGAAQKKPAATTAKAGDGSSVK. A compositionally biased stretch (low complexity) spans 42 to 57; that stretch reads AGAAQKKPAATTAKAG. Residues S60 and S61 each carry the phosphoserine modification. K125 is covalently cross-linked (Glycyl lysine isopeptide (Lys-Gly) (interchain with G-Cter in SUMO2)). Residues S165 and S170 each carry the phosphoserine modification. The interval 216 to 380 is disordered; sequence LNMYTRGKQK…HFERRRKRSR (165 aa). The segment covering 223-232 has biased composition (basic and acidic residues); the sequence is KQKDIQRTDE. Over residues 244-288 the composition is skewed to acidic residues; that stretch reads SSEEGEDQEHEDDGEDEDDEDDDDDDDDDDDDDDEDDEDEEDGEE. Residue K317 forms a Glycyl lysine isopeptide (Lys-Gly) (interchain with G-Cter in SUMO2) linkage. Phosphoserine is present on residues S327, S337, S342, and S410. 467–474 is an ATP binding site; sequence GPPGTGKT. S746 and S751 each carry phosphoserine. Coiled coils occupy residues 970–994 and 1086–1112; these read LTAE…IFLR and YAII…KKRG. In terms of domain architecture, Bromo spans 980–1092; it reads EQEEDTFREL…DTAYAIIKEE (113 aa). The interval 1124–1163 is disordered; the sequence is HVMPKQNSTLVGDKRSDPEQNEKLKTPSTPVACSTPAQLK. K1128 participates in a covalent cross-link: Glycyl lysine isopeptide (Lys-Gly) (interchain with G-Cter in SUMO2). Residues 1135 to 1148 show a composition bias toward basic and acidic residues; that stretch reads GDKRSDPEQNEKLK. S1139 bears the Phosphoserine mark. K1148 is covalently cross-linked (Glycyl lysine isopeptide (Lys-Gly) (interchain with G-Cter in SUMO2)). Residues T1149, T1152, and T1176 each carry the phosphothreonine modification. The span at 1149–1160 shows a compositional bias: polar residues; that stretch reads TPSTPVACSTPA. The tract at residues 1181 to 1242 is disordered; it reads RKISQAKDDS…SESKLELRNN (62 aa). Residues 1185-1200 show a composition bias toward basic and acidic residues; sequence QAKDDSQNAIDHKIES. Phosphoserine occurs at positions 1200, 1233, and 1235. Polar residues predominate over residues 1229 to 1242; sequence QQNASESKLELRNN. A Glycyl lysine isopeptide (Lys-Gly) (interchain with G-Cter in SUMO2) cross-link involves residue K1236. 2 positions are modified to phosphoserine: S1243 and S1302. Phosphothreonine is present on T1323.

It belongs to the AAA ATPase family. In terms of assembly, interacts with ESR1 and NCOA3 and these interactions are enhanced by estradiol. Interacts with acetylated lysine residues on histone H1.4, H2A, H2B and H3 (in vitro). Highly expressed in estrogen receptor positive breast tumors and in osteosarcoma tumors.

Its subcellular location is the nucleus. The enzyme catalyses ATP + H2O = ADP + phosphate + H(+). May be a transcriptional coactivator of the nuclear receptor ESR1 required to induce the expression of a subset of estradiol target genes, such as CCND1, MYC and E2F1. May play a role in the recruitment or occupancy of CREBBP at some ESR1 target gene promoters. May be required for histone hyperacetylation. Involved in the estrogen-induced cell proliferation and cell cycle progression of breast cancer cells. This is ATPase family AAA domain-containing protein 2 (ATAD2) from Homo sapiens (Human).